Consider the following 1382-residue polypeptide: DNA-directed RNA polymerase subunit beta' (1382 aa).

Cys70, Cys72, Cys85, and Cys88 together coordinate Zn(2+). Mg(2+) contacts are provided by Asp460, Asp462, and Asp464. Zn(2+) contacts are provided by Cys808, Cys882, Cys889, and Cys892.

This sequence belongs to the RNA polymerase beta' chain family. As to quaternary structure, the RNAP catalytic core consists of 2 alpha, 1 beta, 1 beta' and 1 omega subunit. When a sigma factor is associated with the core the holoenzyme is formed, which can initiate transcription. The cofactor is Mg(2+). Zn(2+) serves as cofactor.

The catalysed reaction is RNA(n) + a ribonucleoside 5'-triphosphate = RNA(n+1) + diphosphate. DNA-dependent RNA polymerase catalyzes the transcription of DNA into RNA using the four ribonucleoside triphosphates as substrates. The polypeptide is DNA-directed RNA polymerase subunit beta' (Citrifermentans bemidjiense (strain ATCC BAA-1014 / DSM 16622 / JCM 12645 / Bem) (Geobacter bemidjiensis)).